A 197-amino-acid chain; its full sequence is Dephospho-CoA kinase (197 aa).

The DPCK domain occupies 3 to 197; it reads IIGLTGGIAS…IEEIWAKRFP (195 aa). ATP is bound at residue 11 to 16; sequence ASGKST.

Belongs to the CoaE family.

The protein localises to the cytoplasm. The catalysed reaction is 3'-dephospho-CoA + ATP = ADP + CoA + H(+). It functions in the pathway cofactor biosynthesis; coenzyme A biosynthesis; CoA from (R)-pantothenate: step 5/5. Catalyzes the phosphorylation of the 3'-hydroxyl group of dephosphocoenzyme A to form coenzyme A. The polypeptide is Dephospho-CoA kinase (Geobacter sulfurreducens (strain ATCC 51573 / DSM 12127 / PCA)).